Reading from the N-terminus, the 359-residue chain is 3-dehydroquinate synthase (359 aa).

NAD(+) is bound by residues 71–76 (DGEQYK), 105–109 (GVIGD), 129–130 (TT), K142, K151, and 169–172 (CLKT). Zn(2+) is bound by residues E184, H247, and H264.

It belongs to the sugar phosphate cyclases superfamily. Dehydroquinate synthase family. Requires Co(2+) as cofactor. Zn(2+) is required as a cofactor. The cofactor is NAD(+).

Its subcellular location is the cytoplasm. It carries out the reaction 7-phospho-2-dehydro-3-deoxy-D-arabino-heptonate = 3-dehydroquinate + phosphate. The protein operates within metabolic intermediate biosynthesis; chorismate biosynthesis; chorismate from D-erythrose 4-phosphate and phosphoenolpyruvate: step 2/7. In terms of biological role, catalyzes the conversion of 3-deoxy-D-arabino-heptulosonate 7-phosphate (DAHP) to dehydroquinate (DHQ). The chain is 3-dehydroquinate synthase from Shewanella amazonensis (strain ATCC BAA-1098 / SB2B).